An 860-amino-acid polypeptide reads, in one-letter code: Transcription factor E2F8 (860 aa).

Residues 1–114 form a disordered region; it reads MENQKENLFS…NEKSQPSRKE (114 aa). Serine 71 is subject to Phosphoserine. Basic and acidic residues-rich tracts occupy residues 74-84 and 92-114; these read IRSRDQKRGLS and EARD…SRKE. 2 DNA-binding regions span residues 112 to 181 and 261 to 347; these read RKEK…TWHG and RKDK…KWTG. 2 disordered regions span residues 407–433 and 533–616; these read RRKI…PPVP and TPPH…PKED. Over residues 411–426 the composition is skewed to low complexity; that stretch reads SSAPSSPVKSSKAESS. A phosphoserine mark is found at serine 412 and serine 416. Residues 542–554 show a composition bias toward polar residues; it reads VCPTQSSNATGSK. 2 stretches are compositionally biased toward basic and acidic residues: residues 555 to 565 and 586 to 596; these read DPTDAPTEKTA and RSKETTGDRGT.

This sequence belongs to the E2F/DP family. As to quaternary structure, homodimer and heterodimer: mainly forms homodimers and, to a lesser extent, heterodimers with E2F8. Dimerization is important for DNA-binding. Interacts with HIF1A.

It localises to the nucleus. In terms of biological role, atypical E2F transcription factor that participates in various processes such as angiogenesis and polyploidization of specialized cells. Mainly acts as a transcription repressor that binds DNA independently of DP proteins and specifically recognizes the E2 recognition site 5'-TTTC[CG]CGC-3'. Directly represses transcription of classical E2F transcription factors such as E2F1: component of a feedback loop in S phase by repressing the expression of E2F1, thereby preventing p53/TP53-dependent apoptosis. Plays a key role in polyploidization of cells in placenta and liver by regulating the endocycle, probably by repressing genes promoting cytokinesis and antagonizing action of classical E2F proteins (E2F1, E2F2 and/or E2F3). Required for placental development by promoting polyploidization of trophoblast giant cells. Acts as a promoter of sprouting angiogenesis, possibly by acting as a transcription activator: associates with HIF1A, recognizes and binds the VEGFA promoter, which is different from canonical E2 recognition site, and activates expression of the VEGFA gene. This is Transcription factor E2F8 (E2f8) from Rattus norvegicus (Rat).